The chain runs to 139 residues: ATP synthase epsilon chain (139 aa).

It belongs to the ATPase epsilon chain family. F-type ATPases have 2 components, CF(1) - the catalytic core - and CF(0) - the membrane proton channel. CF(1) has five subunits: alpha(3), beta(3), gamma(1), delta(1), epsilon(1). CF(0) has three main subunits: a, b and c.

It is found in the cell inner membrane. In terms of biological role, produces ATP from ADP in the presence of a proton gradient across the membrane. The polypeptide is ATP synthase epsilon chain (Actinobacillus pleuropneumoniae serotype 5b (strain L20)).